The chain runs to 95 residues: DNA-directed RNA polymerase subunit Rpo6 (95 aa).

This sequence belongs to the archaeal Rpo6/eukaryotic RPB6 RNA polymerase subunit family. In terms of assembly, part of the 13-subunit RNA polymerase complex.

The protein resides in the cytoplasm. The enzyme catalyses RNA(n) + a ribonucleoside 5'-triphosphate = RNA(n+1) + diphosphate. Functionally, DNA-dependent RNA polymerase (RNAP) catalyzes the transcription of DNA into RNA using the four ribonucleoside triphosphates as substrates. The protein is DNA-directed RNA polymerase subunit Rpo6 of Saccharolobus solfataricus (strain ATCC 35092 / DSM 1617 / JCM 11322 / P2) (Sulfolobus solfataricus).